Reading from the N-terminus, the 142-residue chain is Nucleoside diphosphate kinase (142 aa).

6 residues coordinate ATP: Lys-11, Phe-59, Arg-87, Thr-93, Arg-104, and Asn-114. The active-site Pros-phosphohistidine intermediate is His-117.

Belongs to the NDK family. As to quaternary structure, homotetramer. Mg(2+) serves as cofactor.

Its subcellular location is the cytoplasm. It carries out the reaction a 2'-deoxyribonucleoside 5'-diphosphate + ATP = a 2'-deoxyribonucleoside 5'-triphosphate + ADP. It catalyses the reaction a ribonucleoside 5'-diphosphate + ATP = a ribonucleoside 5'-triphosphate + ADP. In terms of biological role, major role in the synthesis of nucleoside triphosphates other than ATP. The ATP gamma phosphate is transferred to the NDP beta phosphate via a ping-pong mechanism, using a phosphorylated active-site intermediate. The protein is Nucleoside diphosphate kinase of Yersinia pseudotuberculosis serotype I (strain IP32953).